The sequence spans 1070 residues: DNA-directed RNA polymerase subunit beta (1070 aa).

It belongs to the RNA polymerase beta chain family. In plastids the minimal PEP RNA polymerase catalytic core is composed of four subunits: alpha, beta, beta', and beta''. When a (nuclear-encoded) sigma factor is associated with the core the holoenzyme is formed, which can initiate transcription.

It is found in the plastid. The protein resides in the chloroplast. It catalyses the reaction RNA(n) + a ribonucleoside 5'-triphosphate = RNA(n+1) + diphosphate. Its function is as follows. DNA-dependent RNA polymerase catalyzes the transcription of DNA into RNA using the four ribonucleoside triphosphates as substrates. This Morus indica (Mulberry) protein is DNA-directed RNA polymerase subunit beta.